A 464-amino-acid chain; its full sequence is GTPase Der (464 aa).

2 EngA-type G domains span residues 3–166 (ALVA…PVLE) and 177–350 (LQFA…QSAN). GTP is bound by residues 9–16 (GRPNVGKS), 56–60 (DTGGV), 118–121 (NKAE), 183–190 (GRPNVGKS), 230–234 (DTAGI), and 295–298 (NKWD). The KH-like domain maps to 351–435 (SHLPTGELNR…PIALEFRTVK (85 aa)).

It belongs to the TRAFAC class TrmE-Era-EngA-EngB-Septin-like GTPase superfamily. EngA (Der) GTPase family. As to quaternary structure, associates with the 50S ribosomal subunit.

GTPase that plays an essential role in the late steps of ribosome biogenesis. This is GTPase Der from Nitrosococcus oceani (strain ATCC 19707 / BCRC 17464 / JCM 30415 / NCIMB 11848 / C-107).